Reading from the N-terminus, the 197-residue chain is Adenylate kinase (197 aa).

16 to 21 (GAGKGT) is an ATP binding site. Residues 36 to 65 (STGDILRDHVARGTALGQRVKPILDAGQLV) are NMP. AMP is bound by residues Thr-37, Arg-42, 63 to 65 (QLV), 90 to 93 (GFPR), and Gln-97. The LID stretch occupies residues 131 to 147 (ERGRQAALRGEPVRSDD). ATP is bound at residue Arg-132. 2 residues coordinate AMP: Arg-144 and Arg-155. Residue Gly-183 coordinates ATP.

Belongs to the adenylate kinase family. Monomer.

Its subcellular location is the cytoplasm. The enzyme catalyses AMP + ATP = 2 ADP. Its pathway is purine metabolism; AMP biosynthesis via salvage pathway; AMP from ADP: step 1/1. Catalyzes the reversible transfer of the terminal phosphate group between ATP and AMP. Plays an important role in cellular energy homeostasis and in adenine nucleotide metabolism. This Deinococcus geothermalis (strain DSM 11300 / CIP 105573 / AG-3a) protein is Adenylate kinase.